Reading from the N-terminus, the 344-residue chain is Phosphate acyltransferase (344 aa).

This sequence belongs to the PlsX family. As to quaternary structure, homodimer. Probably interacts with PlsY.

The protein resides in the cytoplasm. It carries out the reaction a fatty acyl-[ACP] + phosphate = an acyl phosphate + holo-[ACP]. The protein operates within lipid metabolism; phospholipid metabolism. Functionally, catalyzes the reversible formation of acyl-phosphate (acyl-PO(4)) from acyl-[acyl-carrier-protein] (acyl-ACP). This enzyme utilizes acyl-ACP as fatty acyl donor, but not acyl-CoA. This chain is Phosphate acyltransferase, found in Actinobacillus pleuropneumoniae serotype 5b (strain L20).